The primary structure comprises 102 residues: C-X-C motif chemokine 10 (102 aa).

The signal sequence occupies residues 1-19 (MNKSGFLIFCLILLTLSQG). Arginine 24 carries the citrulline modification. 2 disulfide bridges follow: cysteine 28–cysteine 55 and cysteine 30–cysteine 72.

This sequence belongs to the intercrine alpha (chemokine CxC) family. Monomer, dimer, and tetramer. Interacts with CXCR3 (via N-terminus).

The protein localises to the secreted. In terms of biological role, pro-inflammatory cytokine that is involved in a wide variety of processes such as chemotaxis, differentiation, and activation of peripheral immune cells, regulation of cell growth, apoptosis and modulation of angiostatic effects. Plays thereby an important role during viral infections by stimulating the activation and migration of immune cells to the infected sites. Mechanistically, binding of CXCL10 to the CXCR3 receptor activates G protein-mediated signaling and results in downstream activation of phospholipase C-dependent pathway, an increase in intracellular calcium production and actin reorganization. In turn, recruitment of activated Th1 lymphocytes occurs at sites of inflammation. Activation of the CXCL10/CXCR3 axis also plays an important role in neurons in response to brain injury for activating microglia, the resident macrophage population of the central nervous system, and directing them to the lesion site. This recruitment is an essential element for neuronal reorganization. This Bos taurus (Bovine) protein is C-X-C motif chemokine 10 (CXCL10).